A 292-amino-acid polypeptide reads, in one-letter code: UDP-N-acetylenolpyruvoylglucosamine reductase (292 aa).

The 162-residue stretch at 27-188 folds into the FAD-binding PCMH-type domain; that stretch reads KIGGPVRLFI…LRVGFRIIKG (162 aa). Residue arginine 166 is part of the active site. Serine 217 (proton donor) is an active-site residue. Glutamate 288 is a catalytic residue.

It belongs to the MurB family. The cofactor is FAD.

The protein resides in the cytoplasm. The enzyme catalyses UDP-N-acetyl-alpha-D-muramate + NADP(+) = UDP-N-acetyl-3-O-(1-carboxyvinyl)-alpha-D-glucosamine + NADPH + H(+). It functions in the pathway cell wall biogenesis; peptidoglycan biosynthesis. In terms of biological role, cell wall formation. The sequence is that of UDP-N-acetylenolpyruvoylglucosamine reductase from Thermosipho melanesiensis (strain DSM 12029 / CIP 104789 / BI429).